Reading from the N-terminus, the 171-residue chain is Acetyltransferase PA2271 (171 aa).

Positions 3–162 (YRIRTSRDED…HEQEIGFAAD (160 aa)) constitute an N-acetyltransferase domain. CoA is bound by residues 84–86 (LSI) and 128–130 (PFY).

Catalyzes the transfer of an acetyl group from acetyl coenzyme A (AcCoA) to an acceptor substrate and releases both CoA and the acetylated product. It can use a variety of substrates including spermidine, spermine and N(8)-acetylspermidine, 7-aminocephalosporanic acid, colistin and thiamine. In Pseudomonas aeruginosa (strain ATCC 15692 / DSM 22644 / CIP 104116 / JCM 14847 / LMG 12228 / 1C / PRS 101 / PAO1), this protein is Acetyltransferase PA2271.